The chain runs to 367 residues: MEAEVINQLNNTLNDLEKRSEDIRVYMDYQGKKDRLEEVIGLSEDPELWNDPKRAQEIGKESKILEGIVLTLDNIASGIEDNRMLIEMAVEENDEEGFAAVKEDVAGLEKQMADLEFKRMFNQPADPNNCFIDITAGAGGTEAEDWAGMLFRMYSRYAERKGFKIEILEEDDGEIAGINRATIRVEGEYAYGLLRTETGVHRLVRYSPFDSNNKRHTSFASVFVYPEIDDSIEIEINPADLRIDTYRASGAGGQHINKTDSAVRITHEPTGIVVQCQNDRSQHANKAAAMEMLKSKLYELEMRKRNEEKQALEEGKSDVGWGSQIRSYVLDSSRIKDLRTGYEVGNTKAVLDGDLDGFIEASLKQGV.

N5-methylglutamine is present on Q254.

It belongs to the prokaryotic/mitochondrial release factor family. Post-translationally, methylated by PrmC. Methylation increases the termination efficiency of RF2.

The protein resides in the cytoplasm. Peptide chain release factor 2 directs the termination of translation in response to the peptide chain termination codons UGA and UAA. The chain is Peptide chain release factor 2 from Neisseria gonorrhoeae (strain ATCC 700825 / FA 1090).